We begin with the raw amino-acid sequence, 145 residues long: Ribosome-binding factor A (145 aa).

Residues 122–132 (KVQRDLESAPR) show a composition bias toward basic and acidic residues. The interval 122–145 (KVQRDLESAPREDDEGEPDSSSRD) is disordered.

Belongs to the RbfA family. Monomer. Binds 30S ribosomal subunits, but not 50S ribosomal subunits or 70S ribosomes.

The protein localises to the cytoplasm. One of several proteins that assist in the late maturation steps of the functional core of the 30S ribosomal subunit. Associates with free 30S ribosomal subunits (but not with 30S subunits that are part of 70S ribosomes or polysomes). Required for efficient processing of 16S rRNA. May interact with the 5'-terminal helix region of 16S rRNA. In Methylorubrum extorquens (strain PA1) (Methylobacterium extorquens), this protein is Ribosome-binding factor A.